The sequence spans 369 residues: Flagellar P-ring protein (369 aa).

The signal sequence occupies residues 1–22 (MIKLKQLIAATLLLSTAFGVHA).

This sequence belongs to the FlgI family. The basal body constitutes a major portion of the flagellar organelle and consists of four rings (L,P,S, and M) mounted on a central rod.

It is found in the periplasm. The protein resides in the bacterial flagellum basal body. Assembles around the rod to form the L-ring and probably protects the motor/basal body from shearing forces during rotation. The polypeptide is Flagellar P-ring protein (Pseudomonas syringae pv. syringae (strain B728a)).